Consider the following 62-residue polypeptide: Protein UL148D (62 aa).

Residues 30–50 (WWISVAIVIFIGVCLVALMYF) form a helical membrane-spanning segment.

The protein resides in the host membrane. The polypeptide is Protein UL148D (UL148D) (Human cytomegalovirus (strain Merlin) (HHV-5)).